Reading from the N-terminus, the 67-residue chain is ATP synthase F(0) complex subunit 8 (67 aa).

The chain crosses the membrane as a helical span at residues 8-24 (TWFTTIVAMILSLFILM). Lys54 is modified (N6-acetyllysine; alternate). Lys54 bears the N6-succinyllysine; alternate mark. Residue Lys57 is modified to N6-acetyllysine.

Belongs to the ATPase protein 8 family. Component of the ATP synthase complex composed at least of ATP5F1A/subunit alpha, ATP5F1B/subunit beta, ATP5MC1/subunit c (homooctomer), MT-ATP6/subunit a, MT-ATP8/subunit 8, ATP5ME/subunit e, ATP5MF/subunit f, ATP5MG/subunit g, ATP5MK/subunit k, ATP5MJ/subunit j, ATP5F1C/subunit gamma, ATP5F1D/subunit delta, ATP5F1E/subunit epsilon, ATP5PF/subunit F6, ATP5PB/subunit b, ATP5PD/subunit d, ATP5PO/subunit OSCP. ATP synthase complex consists of a soluble F(1) head domain (subunits alpha(3) and beta(3)) - the catalytic core - and a membrane F(0) domain - the membrane proton channel (subunits c, a, 8, e, f, g, k and j). These two domains are linked by a central stalk (subunits gamma, delta, and epsilon) rotating inside the F1 region and a stationary peripheral stalk (subunits F6, b, d, and OSCP). Interacts with PRICKLE3.

Its subcellular location is the mitochondrion membrane. Subunit 8, of the mitochondrial membrane ATP synthase complex (F(1)F(0) ATP synthase or Complex V) that produces ATP from ADP in the presence of a proton gradient across the membrane which is generated by electron transport complexes of the respiratory chain. ATP synthase complex consist of a soluble F(1) head domain - the catalytic core - and a membrane F(1) domain - the membrane proton channel. These two domains are linked by a central stalk rotating inside the F(1) region and a stationary peripheral stalk. During catalysis, ATP synthesis in the catalytic domain of F(1) is coupled via a rotary mechanism of the central stalk subunits to proton translocation. In vivo, can only synthesize ATP although its ATP hydrolase activity can be activated artificially in vitro. Part of the complex F(0) domain. The sequence is that of ATP synthase F(0) complex subunit 8 from Oryctolagus cuniculus (Rabbit).